The sequence spans 207 residues: Imidazoleglycerol-phosphate dehydratase (207 aa).

It belongs to the imidazoleglycerol-phosphate dehydratase family.

It is found in the cytoplasm. It catalyses the reaction D-erythro-1-(imidazol-4-yl)glycerol 3-phosphate = 3-(imidazol-4-yl)-2-oxopropyl phosphate + H2O. Its pathway is amino-acid biosynthesis; L-histidine biosynthesis; L-histidine from 5-phospho-alpha-D-ribose 1-diphosphate: step 6/9. The chain is Imidazoleglycerol-phosphate dehydratase from Mycobacterium avium (strain 104).